Reading from the N-terminus, the 644-residue chain is Protein FAM149B1 (644 aa).

Disordered regions lie at residues 392–490 (NQSD…NTLL), 551–575 (TFRS…RPGR), and 609–644 (GHFP…RPGL). A compositionally biased stretch (basic and acidic residues) spans 395 to 404 (DCRDSEDKVS). Residues 449 to 459 (PITSSVTQPIT) are compositionally biased toward polar residues. Polar residues predominate over residues 626 to 644 (QARSHNRGGSTARSSRPGL).

This sequence belongs to the FAM149 family.

This chain is Protein FAM149B1 (fam149b1), found in Danio rerio (Zebrafish).